Here is an 880-residue protein sequence, read N- to C-terminus: MSSNPQHLSGNEIRTRFLDFYAQRGHQILASASLVPEDPTVLLTIAGMLPFKPIFLGQRTPEFKRATTSQKCIRTNDIENVGRTKRHQTFFEMLGNFSFGDYFKEQAIAWGWEISTEVFGLPKERLVVSVFEEDDEAYVIWRDQIGVTEARIKRMGADDNFWVSGPTGPCGPCSEIYYDFHPERGDENIDLEDDTRFIEFYNLVFMQYNRDASGNLTPLQNKNIDTGMGLERITQILQQVPNNYETDLIFPIIETAAKIAGIDYHSSDETTKVSLKVIGDHVRSVVHMIADEIRASNVGRGYVLRRLIRRVVRHGRLIGISGEFINQVAERAIALSESAYPNVRKRETVIKAELEREEANFLKTLDRGEKLLEEIIQQVKKQGQTIISGESAFTLYDTYGFPLELTQEIAEENNLTVDEDDFNVEMQKQVERAKAAHETIDLTVQGSLDKLAEHIHATEFIGYSQATATAKVEVLLVDGVVQEEAEAGTEVQIVLDKTPFYAESGGQIGDRGYISGDGIVVQVEDVKKESDFFVHFGRIERGTLRVGDSVTAQIDRAGRRRAQANHTATHLLQAALKTIVDGGISQAGSLVSFDRLRFDFNSPRGLTAEEIQQVEEQINTWIAEAHSAKIEVLPLAEAKARGAVAMFGEKYGDEVRVIDFPGVSMELCGGTHVSNTAEIGVFKIISEAGVASGVRRIEAVSGLAVLDYLNVRDKVVKDLSDRFKVKPEELPERITTLQNELRTTEKQLETLKGQLAIAKSDSLLQTADTLGDHKIIVAQLEGVDPESLKSAAERLLQKIGNGAVVLGSVPEADKVSLVAAFSPEVNKKGLQAGKFIGAIAKICGGGGGGRPNLAQAGGRDASKLPTALEQAQSELKSALG.

Positions 566, 570, 668, and 672 each coordinate Zn(2+).

This sequence belongs to the class-II aminoacyl-tRNA synthetase family. Zn(2+) is required as a cofactor.

It is found in the cytoplasm. It carries out the reaction tRNA(Ala) + L-alanine + ATP = L-alanyl-tRNA(Ala) + AMP + diphosphate. In terms of biological role, catalyzes the attachment of alanine to tRNA(Ala) in a two-step reaction: alanine is first activated by ATP to form Ala-AMP and then transferred to the acceptor end of tRNA(Ala). Also edits incorrectly charged Ser-tRNA(Ala) and Gly-tRNA(Ala) via its editing domain. This Trichormus variabilis (strain ATCC 29413 / PCC 7937) (Anabaena variabilis) protein is Alanine--tRNA ligase.